A 284-amino-acid chain; its full sequence is Tropomyosin alpha-1 chain (284 aa).

A disordered region spans residues 1–37 (MDAIKKKMQMLKLDKENALDRAEQAETDKKAAEERSK). Positions 1–284 (MDAIKKKMQM…DHALNDMTSI (284 aa)) form a coiled coil. Positions 12-37 (KLDKENALDRAEQAETDKKAAEERSK) are enriched in basic and acidic residues.

The protein belongs to the tropomyosin family. In terms of assembly, homodimer. Heterodimer of an alpha (TPM1, TPM3 or TPM4) and a beta (TPM2) chain.

It is found in the cytoplasm. It localises to the cytoskeleton. In terms of biological role, binds to actin filaments in muscle and non-muscle cells. Plays a central role, in association with the troponin complex, in the calcium dependent regulation of vertebrate striated muscle contraction. Smooth muscle contraction is regulated by interaction with caldesmon. In non-muscle cells is implicated in stabilizing cytoskeleton actin filaments. This is Tropomyosin alpha-1 chain (tpma) from Danio rerio (Zebrafish).